A 45-amino-acid polypeptide reads, in one-letter code: Large ribosomal subunit protein bL36 (45 aa).

It belongs to the bacterial ribosomal protein bL36 family.

This is Large ribosomal subunit protein bL36 from Aliivibrio salmonicida (strain LFI1238) (Vibrio salmonicida (strain LFI1238)).